A 245-amino-acid polypeptide reads, in one-letter code: Putative protein phosphatase 2C-like protein 45 (245 aa).

The PPM-type phosphatase domain occupies 1 to 188 (MEDRFSTITN…DDISVMLIPL (188 aa)).

Belongs to the PP2C family.

This Arabidopsis thaliana (Mouse-ear cress) protein is Putative protein phosphatase 2C-like protein 45.